A 267-amino-acid polypeptide reads, in one-letter code: Acetyl-coenzyme A carboxylase carboxyl transferase subunit beta 1 (267 aa).

The CoA carboxyltransferase N-terminal domain occupies 9–267 (TWQACPKCGR…NYGIGRSAHG (259 aa)). Positions 13, 16, 31, and 34 each coordinate Zn(2+). A C4-type zinc finger spans residues 13-34 (CPKCGRHVHQRQWGTYQQCPYC).

Belongs to the AccD/PCCB family. As to quaternary structure, acetyl-CoA carboxylase is a heterohexamer composed of biotin carboxyl carrier protein (AccB), biotin carboxylase (AccC) and two subunits each of ACCase subunit alpha (AccA) and ACCase subunit beta (AccD). The cofactor is Zn(2+).

It localises to the cytoplasm. It carries out the reaction N(6)-carboxybiotinyl-L-lysyl-[protein] + acetyl-CoA = N(6)-biotinyl-L-lysyl-[protein] + malonyl-CoA. It functions in the pathway lipid metabolism; malonyl-CoA biosynthesis; malonyl-CoA from acetyl-CoA: step 1/1. Its function is as follows. Component of the acetyl coenzyme A carboxylase (ACC) complex. Biotin carboxylase (BC) catalyzes the carboxylation of biotin on its carrier protein (BCCP) and then the CO(2) group is transferred by the transcarboxylase to acetyl-CoA to form malonyl-CoA. In Lactiplantibacillus plantarum (strain JDM1) (Lactobacillus plantarum), this protein is Acetyl-coenzyme A carboxylase carboxyl transferase subunit beta 1.